A 278-amino-acid polypeptide reads, in one-letter code: Tyrosine-protein phosphatase pmp1 (278 aa).

One can recognise a Tyrosine-protein phosphatase domain in the interval 60-214 (GPVCIYPPNI…LSEYQQIIRK (155 aa)). Cys158 (phosphocysteine intermediate) is an active-site residue. The tract at residues 217–278 (SQGPYQSSSL…SSGSISNDAS (62 aa)) is disordered. Positions 252 to 278 (SPSTSESSMFTNLRRTRSSGSISNDAS) are enriched in polar residues.

The protein belongs to the protein-tyrosine phosphatase family. Non-receptor class dual specificity subfamily.

It carries out the reaction O-phospho-L-tyrosyl-[protein] + H2O = L-tyrosyl-[protein] + phosphate. Functionally, dual specificity phosphatase that dephosphorylates MAP kinase pmk1 on a Tyr. Has a role in chloride ion homeostasis by inactivating this pmk1 MAP kinase pathway. The protein is Tyrosine-protein phosphatase pmp1 (pmp1) of Schizosaccharomyces pombe (strain 972 / ATCC 24843) (Fission yeast).